We begin with the raw amino-acid sequence, 283 residues long: Nucleotide-binding protein DR_1434 (283 aa).

Residue 8 to 15 (GLSGSGKS) coordinates ATP. A GTP-binding site is contributed by 57-60 (DTRT).

The protein belongs to the RapZ-like family.

Functionally, displays ATPase and GTPase activities. This chain is Nucleotide-binding protein DR_1434, found in Deinococcus radiodurans (strain ATCC 13939 / DSM 20539 / JCM 16871 / CCUG 27074 / LMG 4051 / NBRC 15346 / NCIMB 9279 / VKM B-1422 / R1).